Here is a 1322-residue protein sequence, read N- to C-terminus: Mediator of RNA polymerase II transcription subunit 12 (1322 aa).

Residues Met1–Asn21 are disordered.

The protein belongs to the Mediator complex subunit 12 family. Component of the SRB8-11 complex, which itself associates with the Mediator complex.

The protein localises to the nucleus. Its function is as follows. Component of the SRB8-11 complex. The SRB8-11 complex is a regulatory module of the Mediator complex which is itself involved in regulation of basal and activated RNA polymerase II-dependent transcription. The SRB8-11 complex may be involved in the transcriptional repression of a subset of genes regulated by Mediator. It may inhibit the association of the Mediator complex with RNA polymerase II to form the holoenzyme complex. This Kluyveromyces lactis (strain ATCC 8585 / CBS 2359 / DSM 70799 / NBRC 1267 / NRRL Y-1140 / WM37) (Yeast) protein is Mediator of RNA polymerase II transcription subunit 12 (SRB8).